Here is a 556-residue protein sequence, read N- to C-terminus: 2-succinyl-5-enolpyruvyl-6-hydroxy-3-cyclohexene-1-carboxylate synthase (556 aa).

Belongs to the TPP enzyme family. MenD subfamily. As to quaternary structure, homodimer. Mg(2+) serves as cofactor. Requires Mn(2+) as cofactor. It depends on thiamine diphosphate as a cofactor.

It catalyses the reaction isochorismate + 2-oxoglutarate + H(+) = 5-enolpyruvoyl-6-hydroxy-2-succinyl-cyclohex-3-ene-1-carboxylate + CO2. It functions in the pathway quinol/quinone metabolism; 1,4-dihydroxy-2-naphthoate biosynthesis; 1,4-dihydroxy-2-naphthoate from chorismate: step 2/7. It participates in quinol/quinone metabolism; menaquinone biosynthesis. Functionally, catalyzes the thiamine diphosphate-dependent decarboxylation of 2-oxoglutarate and the subsequent addition of the resulting succinic semialdehyde-thiamine pyrophosphate anion to isochorismate to yield 2-succinyl-5-enolpyruvyl-6-hydroxy-3-cyclohexene-1-carboxylate (SEPHCHC). This chain is 2-succinyl-5-enolpyruvyl-6-hydroxy-3-cyclohexene-1-carboxylate synthase, found in Shigella boydii serotype 18 (strain CDC 3083-94 / BS512).